A 127-amino-acid chain; its full sequence is Fluoride-specific ion channel FluC (127 aa).

4 consecutive transmembrane segments (helical) span residues 4–24 (LDYL…YLVS), 39–59 (GTII…FAAI), 68–88 (AILF…TFTY), and 102–122 (VAYA…GMIL). 2 residues coordinate Na(+): G78 and T81.

Belongs to the fluoride channel Fluc/FEX (TC 1.A.43) family.

It localises to the cell inner membrane. The enzyme catalyses fluoride(in) = fluoride(out). Its activity is regulated as follows. Na(+) is not transported, but it plays an essential structural role and its presence is essential for fluoride channel function. Its function is as follows. Fluoride-specific ion channel. Important for reducing fluoride concentration in the cell, thus reducing its toxicity. The protein is Fluoride-specific ion channel FluC of Thermotoga maritima (strain ATCC 43589 / DSM 3109 / JCM 10099 / NBRC 100826 / MSB8).